The following is a 259-amino-acid chain: MRGPKKHLKRLAAPSHWMLDKLGGVFAVRPNPGPHKLRESLPLSLFLRNRLKYALNYTEAKKILTQRVVRVDGKVRTCHKFPTGFMDVVAIERTNEYFRMLYDTKGRYVVHRIQAAEADFKLCKVKSVRTVNKGVPVLTTTDGRTIRYPDPHVKVNDTIVFNISTQKITDSVKFEPGNLAYVTGGRNVGRVGIIGHRERLPGASDIIHIKDSAGHSFATRISNVFVIGKGNKALVSLPTGAGIRLSIAEERDKRMAQKH.

The 60-residue stretch at 41-100 (LPLSLFLRNRLKYALNYTEAKKILTQRVVRVDGKVRTCHKFPTGFMDVVAIERTNEYFRM) folds into the S4 RNA-binding domain.

It belongs to the eukaryotic ribosomal protein eS4 family.

The chain is Small ribosomal subunit protein eS4 (rps-4) from Caenorhabditis elegans.